The primary structure comprises 458 residues: Histidine--tRNA ligase (458 aa).

This sequence belongs to the class-II aminoacyl-tRNA synthetase family. In terms of assembly, homodimer.

It is found in the cytoplasm. The enzyme catalyses tRNA(His) + L-histidine + ATP = L-histidyl-tRNA(His) + AMP + diphosphate + H(+). This chain is Histidine--tRNA ligase, found in Azobacteroides pseudotrichonymphae genomovar. CFP2.